Consider the following 406-residue polypeptide: Succinylornithine transaminase (406 aa).

K252 carries the N6-(pyridoxal phosphate)lysine modification.

This sequence belongs to the class-III pyridoxal-phosphate-dependent aminotransferase family. AstC subfamily. Pyridoxal 5'-phosphate is required as a cofactor.

It carries out the reaction N(2)-succinyl-L-ornithine + 2-oxoglutarate = N-succinyl-L-glutamate 5-semialdehyde + L-glutamate. It functions in the pathway amino-acid degradation; L-arginine degradation via AST pathway; L-glutamate and succinate from L-arginine: step 3/5. Functionally, catalyzes the transamination of N(2)-succinylornithine and alpha-ketoglutarate into N(2)-succinylglutamate semialdehyde and glutamate. Can also act as an acetylornithine aminotransferase. The chain is Succinylornithine transaminase from Shigella boydii serotype 18 (strain CDC 3083-94 / BS512).